The chain runs to 494 residues: UPF0371 protein M6_Spy1067 (494 aa).

It belongs to the UPF0371 family.

This chain is UPF0371 protein M6_Spy1067, found in Streptococcus pyogenes serotype M6 (strain ATCC BAA-946 / MGAS10394).